Consider the following 379-residue polypeptide: Presenilin-associated rhomboid-like protein, mitochondrial (379 aa).

The N-terminal 52 residues, 1–52 (MAWRGWAQRGWGCGQAWGASVGGRSCEELTAVLTPPQLLGRRFNFFIQQKCG), are a transit peptide targeting the mitochondrion. Over 53-101 (FRKAPRKVEPRRSDPGTSGEAYKRSALIPPVEETVFYPSPYPIRSLIKP) the chain is Mitochondrial matrix. Phosphoserine is present on Ser-65. Thr-69 is subject to Phosphothreonine. The residue at position 70 (Ser-70) is a Phosphoserine. Residues 102-121 (LFFTVGFTGCAFGSAAIWQY) form a helical membrane-spanning segment. Topologically, residues 122 to 167 (ESLKSRVQSYFDGIKADWLDSIRPQKEGDFRKEINKWWNNLSDGQR) are mitochondrial intermembrane. Residues 168-187 (TVTGIIAANVLVFCLWRVPS) traverse the membrane as a helical segment. Residues 188-207 (LQRTMIRYFTSNPASKVLCS) are Mitochondrial matrix-facing. The helical transmembrane segment at 208–230 (PMLLSTFSHFSLFHMAANMYVLW) threads the bilayer. Topologically, residues 231 to 244 (SFSSSIVNILGQEQ) are mitochondrial intermembrane. The helical transmembrane segment at 245–262 (FMAVYLSAGVISNFVSYV) threads the bilayer. Topologically, residues 263–272 (GKVATGRYGP) are mitochondrial matrix. The chain crosses the membrane as a helical span at residues 273 to 289 (SLGASGAIMTVLAAVCT). The Nucleophile role is filled by Ser-277. At 290-295 (KIPEGR) the chain is on the mitochondrial intermembrane side. A helical membrane pass occupies residues 296 to 318 (LAIIFLPMFTFTAGNALKAIIAM). At 319 to 332 (DTAGMILGWKFFDH) the chain is on the mitochondrial matrix side. The chain crosses the membrane as a helical span at residues 333-354 (AAHLGGALFGIWYVTYGHELIW). His-335 is an active-site residue. Topologically, residues 355-379 (KNREPLVKIWHEIRTNGPKKGGGSK) are mitochondrial intermembrane.

This sequence belongs to the peptidase S54 family. In terms of assembly, interacts with PSEN1 and PSEN2. Binds OPA1. P-beta is proteolytically processed (beta-cleavage) in a PARL-dependent manner. The cleavage is inhibited when residues Ser-65, Thr-69 and Ser-70 are all phosphorylated.

It is found in the mitochondrion inner membrane. It localises to the nucleus. It catalyses the reaction Cleaves type-1 transmembrane domains using a catalytic dyad composed of serine and histidine that are contributed by different transmembrane domains.. Required for the control of apoptosis during postnatal growth. Essential for proteolytic processing of an antiapoptotic form of OPA1 which prevents the release of mitochondrial cytochrome c in response to intrinsic apoptotic signals. Required for the maturation of PINK1 into its 52kDa mature form after its cleavage by mitochondrial-processing peptidase (MPP). Promotes cleavage of serine/threonine-protein phosphatase PGAM5 in damaged mitochondria in response to loss of mitochondrial membrane potential. Mediates differential cleavage of PINK1 and PGAM5 depending on the health status of mitochondria, disassociating from PINK1 and associating with PGAM5 in response to mitochondrial membrane potential loss. Required for processing of CLPB into a form with higher protein disaggregase activity by removing an autoinhibitory N-terminal peptide. Promotes processing of DIABLO/SMAC in the mitochondrion which is required for DIABLO apoptotic activity. Also required for cleavage of STARD7 and TTC19. Promotes changes in mitochondria morphology regulated by phosphorylation of P-beta domain. The chain is Presenilin-associated rhomboid-like protein, mitochondrial (PARL) from Homo sapiens (Human).